Here is a 651-residue protein sequence, read N- to C-terminus: Probable export ATP-binding/permease protein Pfl01_2215 (651 aa).

Residues 6–244 enclose the ABC transporter domain; the sequence is LQLTGISRSF…LSNEDAVPKS (239 aa). 42–49 lines the ATP pocket; sequence GASGSGKS. 5 helical membrane passes run 250–270, 276–296, 524–544, 585–605, and 614–634; these read LVASLGLFKEAFNMAWVALIS, LLTMLGIVIGITSVVSISAIG, LALLLSLIAVISLVVGGIGVM, LGGAIGISLSYAIGHLFSLFI, and LTSVLTAVICSTLIGIVFGFV.

It belongs to the ABC transporter superfamily. Macrolide exporter (TC 3.A.1.122) family. Probably part of a tripartite efflux system, which is composed of an inner membrane transporter, a periplasmic membrane fusion protein, and an outer membrane component.

It is found in the cell inner membrane. In terms of biological role, probably part of a tripartite efflux system. In Pseudomonas fluorescens (strain Pf0-1), this protein is Probable export ATP-binding/permease protein Pfl01_2215.